Here is a 399-residue protein sequence, read N- to C-terminus: Probable inactive 2-oxoglutarate-dependent dioxygenase AOP2 (399 aa).

The Fe2OG dioxygenase domain maps to Gly248 to Pro345. 3 residues coordinate Fe cation: His268, Asp270, and His325. Position 336 (Arg336) interacts with 2-oxoglutarate.

This sequence belongs to the iron/ascorbate-dependent oxidoreductase family. Requires Fe(2+) as cofactor.

This Arabidopsis thaliana (Mouse-ear cress) protein is Probable inactive 2-oxoglutarate-dependent dioxygenase AOP2 (AOP2).